The primary structure comprises 292 residues: MEMO1 family protein PF1638 (292 aa).

Belongs to the MEMO1 family.

The polypeptide is MEMO1 family protein PF1638 (Pyrococcus furiosus (strain ATCC 43587 / DSM 3638 / JCM 8422 / Vc1)).